Reading from the N-terminus, the 41-residue chain is Photosystem II reaction center protein J (41 aa).

Residues 9–29 traverse the membrane as a helical segment; that stretch reads IPLWFVGMVGGLAALGLLAIF.

The protein belongs to the PsbJ family. As to quaternary structure, PSII is composed of 1 copy each of membrane proteins PsbA, PsbB, PsbC, PsbD, PsbE, PsbF, PsbH, PsbI, PsbJ, PsbK, PsbL, PsbM, PsbT, PsbX, PsbY, PsbZ, Psb30/Ycf12, at least 3 peripheral proteins of the oxygen-evolving complex and a large number of cofactors. It forms dimeric complexes.

It localises to the plastid. Its subcellular location is the chloroplast thylakoid membrane. Functionally, one of the components of the core complex of photosystem II (PSII). PSII is a light-driven water:plastoquinone oxidoreductase that uses light energy to abstract electrons from H(2)O, generating O(2) and a proton gradient subsequently used for ATP formation. It consists of a core antenna complex that captures photons, and an electron transfer chain that converts photonic excitation into a charge separation. This is Photosystem II reaction center protein J from Ostreococcus tauri.